We begin with the raw amino-acid sequence, 540 residues long: Chaperonin GroEL 4 (540 aa).

ATP contacts are provided by residues 29 to 32, 86 to 90, G413, 477 to 479, and D493; these read TLGP, DGTTT, and NAA.

Belongs to the chaperonin (HSP60) family. Forms a cylinder of 14 subunits composed of two heptameric rings stacked back-to-back. Interacts with the co-chaperonin GroES.

It is found in the cytoplasm. The catalysed reaction is ATP + H2O + a folded polypeptide = ADP + phosphate + an unfolded polypeptide.. Together with its co-chaperonin GroES, plays an essential role in assisting protein folding. The GroEL-GroES system forms a nano-cage that allows encapsulation of the non-native substrate proteins and provides a physical environment optimized to promote and accelerate protein folding. The sequence is that of Chaperonin GroEL 4 from Frankia alni (strain DSM 45986 / CECT 9034 / ACN14a).